Here is a 484-residue protein sequence, read N- to C-terminus: MAPPKAASHRPAVRRKKSGTLVDSILDKYLNVRFFKYLLLEPAALPIVGLFVLLAELVINVVVIQRVPYTEIDWVAYMQECEGFLNGTTNYSLLRGDTGPLVYPAAFVYIYSALYYVTSHGTNVRLAQYIFAGIYLLQLALVLRLYSKSRKVPPYVLVLSAFTSYRIHSIYVLRLFNDPVAVLLLYAALNLFLDRRWTLGSTFFSLAVGVKMNILLFAPALLLFYLANLGLLRTILQLAVCGVIQLLLGAPFLLTHPVEYLRGSFDLGRIFEHKWTVNYRFLSRDVFENRTFHVSLLGLHLLLLLAFAKPTWTFFQSYVRLRRIEDQLQPQIAQQNLELKAQKRPKKVEKDKDKDQKKFTTEQQSFLKAFEKSLQKASGGKATPAPAQAEPERYGIHFDRCTQLALLPFFLCNLVGVACSRSLHYQFYVWYFHSLPYLAWSTPYSLGVRCLILGLIEYCWNTYPSTNFSSAALHFTHIIPPYQL.

The Cytoplasmic segment spans residues 1 to 43 (MAPPKAASHRPAVRRKKSGTLVDSILDKYLNVRFFKYLLLEPA). A helical transmembrane segment spans residues 44-64 (ALPIVGLFVLLAELVINVVVI). Topologically, residues 65–97 (QRVPYTEIDWVAYMQECEGFLNGTTNYSLLRGD) are lumenal. A helical transmembrane segment spans residues 98-118 (TGPLVYPAAFVYIYSALYYVT). Residues 119 to 125 (SHGTNVR) lie on the Cytoplasmic side of the membrane. The helical transmembrane segment at 126–146 (LAQYIFAGIYLLQLALVLRLY) threads the bilayer. Residues 147 to 171 (SKSRKVPPYVLVLSAFTSYRIHSIY) lie on the Lumenal side of the membrane. The chain crosses the membrane as a helical span at residues 172–192 (VLRLFNDPVAVLLLYAALNLF). Over 193–211 (LDRRWTLGSTFFSLAVGVK) the chain is Cytoplasmic. A helical transmembrane segment spans residues 212 to 232 (MNILLFAPALLLFYLANLGLL). A topological domain (lumenal) is located at residue arginine 233. The helical transmembrane segment at 234 to 254 (TILQLAVCGVIQLLLGAPFLL) threads the bilayer. At 255–294 (THPVEYLRGSFDLGRIFEHKWTVNYRFLSRDVFENRTFHV) the chain is on the cytoplasmic side. The chain crosses the membrane as a helical span at residues 295 to 315 (SLLGLHLLLLLAFAKPTWTFF). Topologically, residues 316-403 (QSYVRLRRIE…YGIHFDRCTQ (88 aa)) are lumenal. A helical transmembrane segment spans residues 404–424 (LALLPFFLCNLVGVACSRSLH). Residues 425-426 (YQ) lie on the Cytoplasmic side of the membrane. The helical transmembrane segment at 427–447 (FYVWYFHSLPYLAWSTPYSLG) threads the bilayer. Residues 448 to 484 (VRCLILGLIEYCWNTYPSTNFSSAALHFTHIIPPYQL) lie on the Lumenal side of the membrane.

This sequence belongs to the glycosyltransferase ALG3 family.

The protein resides in the endoplasmic reticulum membrane. The catalysed reaction is an alpha-D-Man-(1-&gt;2)-alpha-D-Man-(1-&gt;2)-alpha-D-Man-(1-&gt;3)-[alpha-D-Man-(1-&gt;6)]-beta-D-Man-(1-&gt;4)-beta-D-GlcNAc-(1-&gt;4)-alpha-D-GlcNAc-diphospho-di-trans,poly-cis-dolichol + a di-trans,poly-cis-dolichyl beta-D-mannosyl phosphate = an alpha-D-Man-(1-&gt;2)-alpha-D-Man-(1-&gt;2)-alpha-D-Man-(1-&gt;3)-[alpha-D-Man-(1-&gt;3)-alpha-D-Man-(1-&gt;6)]-beta-D-Man-(1-&gt;4)-beta-D-GlcNAc-(1-&gt;4)-alpha-D-GlcNAc-diphospho-di-trans,poly-cis-dolichol + a di-trans,poly-cis-dolichyl phosphate + H(+). The protein operates within protein modification; protein glycosylation. Probable alpha-1,3-mannosyltransferase involved in the N-glycosylation pathway. Involved in glycosylation of the TNF receptor grnd, regulating its ligand affinity. Required for normal epithelial growth and architecture. Suppressor of JNK-dependent intestinal stem cell proliferation. The chain is Dolichyl-P-Man:Man5GlcNAc2-PP-dolichol alpha-1,3-mannosyltransferase l(2)not2 from Drosophila melanogaster (Fruit fly).